Here is a 198-residue protein sequence, read N- to C-terminus: Transcriptional regulator GfcR (198 aa).

It belongs to the purine/pyrimidine phosphoribosyltransferase family. GfcR subfamily.

This chain is Transcriptional regulator GfcR, found in Methanospirillum hungatei JF-1 (strain ATCC 27890 / DSM 864 / NBRC 100397 / JF-1).